The sequence spans 176 residues: Probable fimbrial subunit LpfE (176 aa).

A signal peptide spans 1 to 23 (MKFKRLLHSGIASLSLVACGVNA).

The protein belongs to the fimbrial protein family.

It localises to the fimbrium. Part of the lpfABCC'DE fimbrial operon. LP fimbriae may participate in the interaction with eukaryotic cells by assisting in microcolony formation. This is Probable fimbrial subunit LpfE (lpfE) from Escherichia coli O157:H7.